A 744-amino-acid chain; its full sequence is Dual specificity protein kinase shkD (744 aa).

A disordered region spans residues 1–276; that stretch reads MKRFFSNLFK…SGPPEILPEE (276 aa). Composition is skewed to low complexity over residues 25-70, 79-107, and 127-200; these read PTTS…NSNQ, SPST…SFTP, and TSTT…QTAS. Positions 201-210 are enriched in polar residues; it reads VNHTSSDQSL. Over residues 211 to 236 the composition is skewed to low complexity; it reads NAQNVTQTNNNNNNNNNNNNNNNANN. The region spanning 277 to 534 is the Protein kinase domain; that stretch reads IDRTDFLGQG…EILFRLNEIL (258 aa). ATP-binding positions include 283–291 and K304; that span reads LGQGSFGSV. Residue D400 is the Proton acceptor of the active site. The SH2 domain maps to 641–734; it reads WFHGDIVREQ…LVPCPKFTQE (94 aa).

This sequence belongs to the protein kinase superfamily. Ser/Thr protein kinase family. SH2 domain-containing protein kinase subfamily.

Its subcellular location is the membrane. The catalysed reaction is L-seryl-[protein] + ATP = O-phospho-L-seryl-[protein] + ADP + H(+). It catalyses the reaction L-threonyl-[protein] + ATP = O-phospho-L-threonyl-[protein] + ADP + H(+). In terms of biological role, required for proper chemotaxis and phagocytosis; proper spatiotemporal control of F-actin levels in chemotaxing cells. Negative regulator of the PI3K (phosphatidylinositol 3 kinase) pathway. Predominantly phosphorylates serines and threonines and tyrosines at a lower level. The sequence is that of Dual specificity protein kinase shkD (shkD) from Dictyostelium discoideum (Social amoeba).